The sequence spans 130 residues: Methylglyoxal synthase (130 aa).

Residues 1–130 form the MGS-like domain; it reads MSKPRIALIA…DLARNMQDVC (130 aa). Substrate-binding positions include histidine 11, lysine 15, 37-40, and 57-58; these read TGTT and SG. Residue aspartate 63 is the Proton donor/acceptor of the active site. Position 90 (histidine 90) interacts with substrate.

Belongs to the methylglyoxal synthase family.

The enzyme catalyses dihydroxyacetone phosphate = methylglyoxal + phosphate. Its function is as follows. Catalyzes the formation of methylglyoxal from dihydroxyacetone phosphate. The protein is Methylglyoxal synthase of Burkholderia lata (strain ATCC 17760 / DSM 23089 / LMG 22485 / NCIMB 9086 / R18194 / 383).